The sequence spans 475 residues: PRAME family member 20 (475 aa).

One copy of the LRR 1; degenerate repeat lies at 97 to 124 (RWKLQVLDLQDVSENFWMVWSEAMARRC). The stretch at 179–203 (HLCCKKLKMLGMLFHNIRNILKTVN) is one LRR 2; degenerate repeat. The LRR 3; degenerate repeat unit spans residues 204–230 (LDCIQEVEVNCNWTLPVLAEFTPYLGQ). One copy of the LRR 4; degenerate repeat lies at 231 to 265 (MRNLRKLVLSDIDSRYISPEQKKEFVTQFTTQFLK). LRR repeat units follow at residues 266–291 (LRCLQKLYMNSVSFLEGHLDQMLSCL), 292–323 (KTSLNILAITNCVLLESDLKHLSKYPSIGQLK), 324–342 (TLDLSGTRLANFSLVPLQV), 348–375 (AATLEYLDLDDCGIVDSQVNAILPALSR), and 376–400 (CFELTTFSFRGNPISTATLENLLCH).

Belongs to the PRAME family.

The polypeptide is PRAME family member 20 (Homo sapiens (Human)).